The primary structure comprises 436 residues: Coiled-coil domain-containing protein 71 (436 aa).

The disordered stretch occupies residues 95–119 (ATSLPARAPQTAKSVPTGQTTLLPV). Polar residues predominate over residues 105-116 (TAKSVPTGQTTL). Phosphoserine is present on serine 129. 2 disordered regions span residues 210–258 (LRKG…MKGR) and 314–405 (ALRG…KVDR). Residues 264–334 (KTVRGKAPRT…QAKAKAARTK (71 aa)) are a coiled coil. Basic residues predominate over residues 329-340 (KAARTKHKKRPK). Over residues 344-359 (QTRTGRTSLKNSSETV) the composition is skewed to polar residues. A compositionally biased stretch (basic residues) spans 373-386 (PPKKRARCVPRSKA).

The sequence is that of Coiled-coil domain-containing protein 71 (Ccdc71) from Rattus norvegicus (Rat).